The primary structure comprises 114 residues: UPF0342 protein SSP0954 (114 aa).

The protein belongs to the UPF0342 family.

This chain is UPF0342 protein SSP0954, found in Staphylococcus saprophyticus subsp. saprophyticus (strain ATCC 15305 / DSM 20229 / NCIMB 8711 / NCTC 7292 / S-41).